Consider the following 135-residue polypeptide: S-protein homolog 7 (135 aa).

A signal peptide spans 1–20; it reads MNNLFVLVIIIVLSAGSNNG.

Belongs to the plant self-incompatibility (S1) protein family.

Its subcellular location is the secreted. This Arabidopsis thaliana (Mouse-ear cress) protein is S-protein homolog 7.